A 75-amino-acid chain; its full sequence is Notewaprin-b (75 aa).

The signal sequence occupies residues 1-24 (MSSGGLLLLLGLLTLWAELTPVSS). The WAP domain maps to 27-72 (RPKKPGLCPPRPQKPPCVRECKNDWICPGEQKCCRYGCIYECRDPI). 4 disulfide bridges follow: Cys34–Cys60, Cys43–Cys64, Cys47–Cys59, and Cys53–Cys68.

The protein belongs to the venom waprin family. In terms of tissue distribution, expressed by the venom gland.

It is found in the secreted. Damages membranes of susceptible bacteria. Has no hemolytic activity. Not toxic to mice. Does not inhibit the proteinases elastase and cathepsin G. The chain is Notewaprin-b from Notechis scutatus scutatus (Mainland tiger snake).